The sequence spans 251 residues: 3-deoxy-manno-octulosonate cytidylyltransferase (251 aa).

Belongs to the KdsB family.

The protein resides in the cytoplasm. The enzyme catalyses 3-deoxy-alpha-D-manno-oct-2-ulosonate + CTP = CMP-3-deoxy-beta-D-manno-octulosonate + diphosphate. The protein operates within nucleotide-sugar biosynthesis; CMP-3-deoxy-D-manno-octulosonate biosynthesis; CMP-3-deoxy-D-manno-octulosonate from 3-deoxy-D-manno-octulosonate and CTP: step 1/1. It participates in bacterial outer membrane biogenesis; lipopolysaccharide biosynthesis. Activates KDO (a required 8-carbon sugar) for incorporation into bacterial lipopolysaccharide in Gram-negative bacteria. This chain is 3-deoxy-manno-octulosonate cytidylyltransferase, found in Rhizobium etli (strain CIAT 652).